We begin with the raw amino-acid sequence, 214 residues long: Reticulon-3-A (214 aa).

Residues 1–21 (MAETSGPQSSHISSSSVGEKG) form a disordered region. Residues 26–214 (VRDLLYWRDV…LPGALKKKSE (189 aa)) enclose the Reticulon domain. Transmembrane regions (helical) follow at residues 46–66 (MVLLLSLAAFSIISVISYLVL) and 155–175 (VFNGITLLILGVLLTFTAPIV).

As to quaternary structure, homodimer. Expressed in the animal hemisphere at the four-cell stage. During gastrulation, expression becomes restricted to the prospective neuroectoderm. At the early tail bud stage, expressed in the head structure. At the tadpole stage, expressed in head and neural tissues including the otic vesicle and optic nerve.

It is found in the endoplasmic reticulum membrane. The protein resides in the golgi apparatus membrane. Its function is as follows. May be involved in membrane trafficking in the early secretory pathway. In Xenopus laevis (African clawed frog), this protein is Reticulon-3-A (rtn3-a).